The chain runs to 319 residues: Transcription factor VBP (319 aa).

Composition is skewed to low complexity over residues 1 to 31 (MPGR…GAVA) and 143 to 158 (ASAS…STAV). Disordered regions lie at residues 1–35 (MPGR…QQPE) and 139–186 (EKEP…DPDC). The span at 159-180 (YQQSEAASSTESPPQNERNTPS) shows a compositional bias: polar residues. The bZIP domain occupies 243 to 306 (DEKYWTRRKK…GRCKNIVSKY (64 aa)). Positions 245–265 (KYWTRRKKNNVAAKRSRDARR) are basic motif. The leucine-zipper stretch occupies residues 266–273 (LKENQITI).

Belongs to the bZIP family. PAR subfamily. Binds DNA as a homodimer or a heterodimer. Exists as a stable dimer in the absence of DNA. In terms of tissue distribution, isoform 1 and isoform 3 are expressed in a variety of somatic tissues, including liver, heart, intestine, stomach and kidney. Both isoforms are also expressed in hepatoma (LMH) cells and in embryonic fibroblast cell lines. Isoform 2 and isoform 4 are expressed in adult heart and intestine.

It localises to the nucleus. In terms of biological role, transcription factor that binds to and transactivates the vitellogenin II (VTG2) promoter. Binds to the palindromic sequence 5'-GTTTACATAAAC-3'. This is Transcription factor VBP (TEF) from Gallus gallus (Chicken).